Reading from the N-terminus, the 1325-residue chain is Cellulose synthase 1 operon protein C (1325 aa).

A signal peptide spans 1–30 (MNRRYVFSLSAGLLASSCMGAIMPVPVARA). TPR repeat units lie at residues 50 to 83 (RQILLQQARFWLQQQQYDNARQALQNAQRIAPDA), 85 to 117 (DVLEVQGEYQTAMGNREAAADTLRHLQEVAPGS), 292 to 325 (AGLARQAGFQQLNSGRLSAAEQSFQSALQINSHD), 326 to 359 (ADSLGGMGLVSMRQGDAAEARRYFQEAMAADPKT), 406 to 439 (TGATLMLADLQRTTGQIDASEQEYRSVLARDPNN), 558 to 591 (NDAATRRLLSGLSPEDYSPAIRSIAEEMQIKEDL), 702 to 735 (MGIAVAQSDLLNQRGDQAQAYDHLAPALRADPEA), and 737 to 769 (SPKLALARLYNGEGKSSKALDIDLAVLRHNPQD). The interval 838-886 (VEGSRSASGPAATEEDALAPPSSNPFRHHGYGRQTELGAPVTGGSYSME) is disordered.

This sequence belongs to the AcsC/BcsC family.

Its subcellular location is the cell outer membrane. Its pathway is glycan metabolism; bacterial cellulose biosynthesis. Functionally, required for maximal bacterial cellulose synthesis. It may be involved in the formation of a membrane complex for extrusion of the cellulose product. The protein is Cellulose synthase 1 operon protein C (bcsCI) of Komagataeibacter xylinus (Gluconacetobacter xylinus).